We begin with the raw amino-acid sequence, 116 residues long: S-adenosylmethionine decarboxylase proenzyme (116 aa).

The active-site Schiff-base intermediate with substrate; via pyruvic acid is Ser-62. Pyruvic acid (Ser); by autocatalysis is present on Ser-62. His-67 serves as the catalytic Proton acceptor; for processing activity. The Proton donor; for catalytic activity role is filled by Cys-82.

This sequence belongs to the prokaryotic AdoMetDC family. Type 1 subfamily. In terms of assembly, heterotetramer of two alpha and two beta chains arranged as a dimer of alpha/beta heterodimers. Pyruvate is required as a cofactor. Is synthesized initially as an inactive proenzyme. Formation of the active enzyme involves a self-maturation process in which the active site pyruvoyl group is generated from an internal serine residue via an autocatalytic post-translational modification. Two non-identical subunits are generated from the proenzyme in this reaction, and the pyruvate is formed at the N-terminus of the alpha chain, which is derived from the carboxyl end of the proenzyme. The post-translation cleavage follows an unusual pathway, termed non-hydrolytic serinolysis, in which the side chain hydroxyl group of the serine supplies its oxygen atom to form the C-terminus of the beta chain, while the remainder of the serine residue undergoes an oxidative deamination to produce ammonia and the pyruvoyl group blocking the N-terminus of the alpha chain.

The catalysed reaction is S-adenosyl-L-methionine + H(+) = S-adenosyl 3-(methylsulfanyl)propylamine + CO2. It participates in amine and polyamine biosynthesis; S-adenosylmethioninamine biosynthesis; S-adenosylmethioninamine from S-adenosyl-L-methionine: step 1/1. In terms of biological role, catalyzes the decarboxylation of S-adenosylmethionine to S-adenosylmethioninamine (dcAdoMet), the propylamine donor required for the synthesis of the polyamines spermine and spermidine from the diamine putrescine. The protein is S-adenosylmethionine decarboxylase proenzyme of Thermomicrobium roseum (strain ATCC 27502 / DSM 5159 / P-2).